A 266-amino-acid polypeptide reads, in one-letter code: Type III pantothenate kinase (266 aa).

11–18 (DIGNTSTV) is a binding site for ATP. 111-114 (GADR) is a substrate binding site. D113 functions as the Proton acceptor in the catalytic mechanism. Residue D135 coordinates K(+). T138 lines the ATP pocket. T190 contributes to the substrate binding site.

Belongs to the type III pantothenate kinase family. Homodimer. The cofactor is NH4(+). K(+) serves as cofactor.

It localises to the cytoplasm. The enzyme catalyses (R)-pantothenate + ATP = (R)-4'-phosphopantothenate + ADP + H(+). The protein operates within cofactor biosynthesis; coenzyme A biosynthesis; CoA from (R)-pantothenate: step 1/5. Catalyzes the phosphorylation of pantothenate (Pan), the first step in CoA biosynthesis. This Deinococcus geothermalis (strain DSM 11300 / CIP 105573 / AG-3a) protein is Type III pantothenate kinase.